A 375-amino-acid chain; its full sequence is Lipid-A-disaccharide synthase (375 aa).

It belongs to the LpxB family.

The enzyme catalyses a lipid X + a UDP-2-N,3-O-bis[(3R)-3-hydroxyacyl]-alpha-D-glucosamine = a lipid A disaccharide + UDP + H(+). It participates in bacterial outer membrane biogenesis; LPS lipid A biosynthesis. Condensation of UDP-2,3-diacylglucosamine and 2,3-diacylglucosamine-1-phosphate to form lipid A disaccharide, a precursor of lipid A, a phosphorylated glycolipid that anchors the lipopolysaccharide to the outer membrane of the cell. The polypeptide is Lipid-A-disaccharide synthase (Pseudomonas putida (strain ATCC 47054 / DSM 6125 / CFBP 8728 / NCIMB 11950 / KT2440)).